We begin with the raw amino-acid sequence, 422 residues long: Carboxypeptidase B2 (422 aa).

Residues 1-21 (MKLHGLGILVAIILYEQHGFA) form the signal peptide. The propeptide at 22–113 (FQSGQVLSAL…QTFNDTVSPR (92 aa)) is activation peptide. Asn43, Asn72, Asn84, and Asn107 each carry an N-linked (GlcNAc...) asparagine glycan. In terms of domain architecture, Peptidase M14 spans 121–418 (QYHSLNEIYS…AAISKIVWHV (298 aa)). Cys177 and Cys190 are disulfide-bonded. Residues His180 and Glu183 each coordinate Zn(2+). Substrate-binding positions include 180 to 183 (HARE) and Arg238. Asn240 is a glycosylation site (N-linked (GlcNAc...) asparagine). Cystine bridges form between Cys249–Cys273 and Cys264–Cys278. 255 to 256 (NR) contacts substrate. His309 contacts Zn(2+). 310–311 (SY) contributes to the substrate binding site. Asn322 is a glycosylation site (N-linked (GlcNAc...) asparagine). Tyr362 contacts substrate. Glu384 (proton donor/acceptor) is an active-site residue.

Belongs to the peptidase M14 family. Zn(2+) is required as a cofactor. As to expression, plasma; synthesized in the liver.

It localises to the secreted. It catalyses the reaction Release of C-terminal Arg and Lys from a polypeptide.. With respect to regulation, TAFI/CPB2 is unique among carboxypeptidases in that it spontaneously inactivates with a short half-life, a property that is crucial for its role in controlling blood clot lysis. The zymogen is stabilized by interactions with the activation peptide. Release of the activation peptide increases a dynamic flap mobility and in time this leads to conformational changes that disrupt the catalytic site and expose a cryptic thrombin-cleavage site present at Arg-323. Its function is as follows. Cleaves C-terminal arginine or lysine residues from biologically active peptides such as kinins or anaphylatoxins in the circulation thereby regulating their activities. Down-regulates fibrinolysis by removing C-terminal lysine residues from fibrin that has already been partially degraded by plasmin. The protein is Carboxypeptidase B2 (Cpb2) of Mus musculus (Mouse).